Reading from the N-terminus, the 597-residue chain is Cytosolic Fe-S cluster assembly factor nar1 (597 aa).

Residues Cys-20, Cys-62, Cys-65, Cys-68, Cys-216, and Cys-271 each coordinate [4Fe-4S] cluster. Residues Arg-428 to Ser-449 are disordered. Positions 462 and 466 each coordinate [4Fe-4S] cluster. Positions Arg-479–Gln-505 are disordered.

Belongs to the NARF family.

Component of the cytosolic Fe/S protein assembly machinery. Required for maturation of extramitochondrial Fe/S proteins. May play a role in the transfer of pre-assembled Fe/S clusters to target apoproteins. This is Cytosolic Fe-S cluster assembly factor nar1 (nar1) from Aspergillus niger (strain ATCC MYA-4892 / CBS 513.88 / FGSC A1513).